The sequence spans 688 residues: Elongation factor G (688 aa).

Residues 8 to 282 enclose the tr-type G domain; sequence ERTRNIGIMA…AVLDYLPAPT (275 aa). Residues 17–24, 81–85, and 135–138 contribute to the GTP site; these read AHIDAGKT, DTPGH, and NKMD.

Belongs to the TRAFAC class translation factor GTPase superfamily. Classic translation factor GTPase family. EF-G/EF-2 subfamily.

Its subcellular location is the cytoplasm. Its function is as follows. Catalyzes the GTP-dependent ribosomal translocation step during translation elongation. During this step, the ribosome changes from the pre-translocational (PRE) to the post-translocational (POST) state as the newly formed A-site-bound peptidyl-tRNA and P-site-bound deacylated tRNA move to the P and E sites, respectively. Catalyzes the coordinated movement of the two tRNA molecules, the mRNA and conformational changes in the ribosome. This Clostridioides difficile (strain 630) (Peptoclostridium difficile) protein is Elongation factor G.